A 360-amino-acid polypeptide reads, in one-letter code: MIKVRLQKDNDLMDILNIMAPGTPLRDGLENILRAKTGGLIVIGDSEEILDIVDGGFTIDAEYSPSYVYELAKMDGAIILSGDVKRIIRANAQLMPDPSVPTFETGTRHRTADRIAKQTGNIVIAISQRRNIITIYRNNIKYVLRDSSVILGKANQALQTLEKYVSVLDKVINNLNVLEFRDLVTLFDVMTAIQRTEMVMRIVWEMERYICELGNEARLISMQLNELVRYVEEDEILLIRDYCETYMDYTEVYDEIQSMSSEELINLDQISKILGYTGVPLVDTFISPRGYRMLHRIPRIPSNVIENVVKNFKELKAVMEASYEQLDKVEGIGEARAKAIKNGLRRLKEQANIDKNIVTR.

Residues 9-147 (DNDLMDILNI…NNIKYVLRDS (139 aa)) form the DAC domain. ATP-binding positions include Gly-76, Leu-94, and 107 to 111 (TRHRT).

This sequence belongs to the DisA family. Homooctamer. Mg(2+) is required as a cofactor.

The catalysed reaction is 2 ATP = 3',3'-c-di-AMP + 2 diphosphate. Participates in a DNA-damage check-point that is active prior to asymmetric division when DNA is damaged. DisA forms globular foci that rapidly scan along the chromosomes during sporulation, searching for lesions. When a lesion is present, DisA pauses at the lesion site. This triggers a cellular response that culminates in a temporary block in sporulation initiation. Functionally, also has diadenylate cyclase activity, catalyzing the condensation of 2 ATP molecules into cyclic di-AMP (c-di-AMP). c-di-AMP acts as a signaling molecule that couples DNA integrity with progression of sporulation. The rise in c-di-AMP level generated by DisA while scanning the chromosome, operates as a positive signal that advances sporulation; upon encountering a lesion, the DisA focus arrests at the damaged site and halts c-di-AMP synthesis. The protein is DNA integrity scanning protein DisA of Clostridium tetani (strain Massachusetts / E88).